Consider the following 207-residue polypeptide: Guanylate kinase (207 aa).

Residues 4–184 (GTLYIVSAPS…ALMDFKAIIR (181 aa)) enclose the Guanylate kinase-like domain. 11–18 (APSGAGKS) is an ATP binding site.

It belongs to the guanylate kinase family.

Its subcellular location is the cytoplasm. It catalyses the reaction GMP + ATP = GDP + ADP. The catalysed reaction is dZMP + ATP = dZDP + ADP. It functions in the pathway purine metabolism. Its function is as follows. Essential for recycling GMP and indirectly, cGMP. In terms of biological role, (Microbial infection) Catalyzes the phosphorylation of dZMP to dZDP, when the bacterium is infected by a phage that produces the substrate for the synthesis of dZTP (2- amino-2'-deoxyadenosine 5'-triphosphate), which is then used by the phage as a DNA polymerase substrate. The protein is Guanylate kinase (gmk) of Vibrio cholerae serotype O1 (strain ATCC 39315 / El Tor Inaba N16961).